The chain runs to 1328 residues: Protein turtle homolog B (1328 aa).

Positions 1–20 are cleaved as a signal peptide; sequence MIWYVATLIASVISTRGLVA. Residues 21–722 lie on the Extracellular side of the membrane; it reads QVAHGLREEP…DLTDDGLARP (702 aa). Ig-like domains are found at residues 30 to 115, 139 to 226, 228 to 320, 324 to 415, and 420 to 504; these read PEFV…ECKV, PTFT…LLVQ, PPFI…AYLT, PARV…ARLV, and PYFT…THLT. Cystine bridges form between cysteine 45-cysteine 113 and cysteine 161-cysteine 208. 2 N-linked (GlcNAc...) asparagine glycosylation sites follow: asparagine 241 and asparagine 258. 3 cysteine pairs are disulfide-bonded: cysteine 250–cysteine 303, cysteine 346–cysteine 397, and cysteine 442–cysteine 488. Fibronectin type-III domains are found at residues 512 to 604 and 614 to 708; these read APGS…TLAF and LVTP…STDI. A glycan (N-linked (GlcNAc...) asparagine) is linked at asparagine 624. Residues 723–743 form a helical membrane-spanning segment; the sequence is VLAGIVATICFLAAAILFSTL. Topologically, residues 744–1328 are cytoplasmic; it reads AACFVNKQRK…EPPTTLPTSG (585 aa). Disordered regions lie at residues 758 to 817, 914 to 1040, and 1107 to 1328; these read RKKD…EKEL, PMSS…PEPW, and SPGR…PTSG. 3 positions are modified to phosphoserine: serine 775, serine 783, and serine 794. A compositionally biased stretch (low complexity) spans 990–1001; it reads SPLSSVMSSPPL. Composition is skewed to polar residues over residues 1018 to 1033, 1129 to 1141, and 1199 to 1214; these read ENAS…TPTG, LVSQ…TSQG, and SRLS…SRTG. Residue arginine 1136 is modified to Omega-N-methylarginine. A phosphoserine mark is found at serine 1207 and serine 1215. Residues 1246–1273 show a composition bias toward low complexity; it reads SFSRKSTPSSTGSPSQSSRSGSPSYRPT. 2 stretches are compositionally biased toward pro residues: residues 1284–1295 and 1318–1328; these read PSPPPGPAPPAP and PEPPTTLPTSG.

It belongs to the immunoglobulin superfamily. Turtle family. Found in a complex with MAGI2 and NLGN2, where it interacts with MAGI2 (via PDZ 5 and PDZ 6 domains). N-glycosylated and sialylated. Not significantly O-glycosylated. In terms of tissue distribution, detected primarily in brain, including cortex, hippocampus, cerebellum and striatum. Largely restricted to inhibitory GABAergic interneurons (at protein level).

The protein resides in the postsynaptic cell membrane. It localises to the postsynaptic density. Transmembrane protein which is abundantly expressed in interneurons, where it may regulate inhibitory synapse development. May mediate homophilic cell adhesion. The protein is Protein turtle homolog B of Rattus norvegicus (Rat).